Reading from the N-terminus, the 331-residue chain is NADH-quinone oxidoreductase subunit H (331 aa).

9 consecutive transmembrane segments (helical) span residues 5-25 (LFFV…MASL), 45-65 (GPDM…IKLF), 78-98 (FIFL…LAPV), 122-142 (VLYI…AGLA), 156-176 (VVAL…VVMV), 192-212 (IFNW…MASF), 245-265 (FFIG…LLFL), 271-291 (FLFI…FFFF), and 311-331 (WKIL…ALLI).

Belongs to the complex I subunit 1 family. As to quaternary structure, NDH-1 is composed of 14 different subunits. Subunits NuoA, H, J, K, L, M, N constitute the membrane sector of the complex.

It localises to the cell inner membrane. It carries out the reaction a quinone + NADH + 5 H(+)(in) = a quinol + NAD(+) + 4 H(+)(out). In terms of biological role, NDH-1 shuttles electrons from NADH, via FMN and iron-sulfur (Fe-S) centers, to quinones in the respiratory chain. The immediate electron acceptor for the enzyme in this species is believed to be ubiquinone. Couples the redox reaction to proton translocation (for every two electrons transferred, four hydrogen ions are translocated across the cytoplasmic membrane), and thus conserves the redox energy in a proton gradient. This subunit may bind ubiquinone. The protein is NADH-quinone oxidoreductase subunit H of Campylobacter concisus (strain 13826).